The chain runs to 160 residues: 6,7-dimethyl-8-ribityllumazine synthase (160 aa).

5-amino-6-(D-ribitylamino)uracil contacts are provided by residues tryptophan 26, 58-60 (AIE), and 80-82 (VVI). 85–86 (ET) lines the (2S)-2-hydroxy-3-oxobutyl phosphate pocket. Residue histidine 88 is the Proton donor of the active site. Residue asparagine 113 participates in 5-amino-6-(D-ribitylamino)uracil binding. Arginine 127 contacts (2S)-2-hydroxy-3-oxobutyl phosphate.

It belongs to the DMRL synthase family. Homopentamer.

It carries out the reaction (2S)-2-hydroxy-3-oxobutyl phosphate + 5-amino-6-(D-ribitylamino)uracil = 6,7-dimethyl-8-(1-D-ribityl)lumazine + phosphate + 2 H2O + H(+). The protein operates within cofactor biosynthesis; riboflavin biosynthesis; riboflavin from 2-hydroxy-3-oxobutyl phosphate and 5-amino-6-(D-ribitylamino)uracil: step 1/2. Functionally, catalyzes the formation of 6,7-dimethyl-8-ribityllumazine by condensation of 5-amino-6-(D-ribitylamino)uracil with 3,4-dihydroxy-2-butanone 4-phosphate. This is the penultimate step in the biosynthesis of riboflavin. This chain is 6,7-dimethyl-8-ribityllumazine synthase, found in Mycobacteroides abscessus (strain ATCC 19977 / DSM 44196 / CCUG 20993 / CIP 104536 / JCM 13569 / NCTC 13031 / TMC 1543 / L948) (Mycobacterium abscessus).